A 393-amino-acid polypeptide reads, in one-letter code: MELKNLAQTLLPRLVEIRRHLHAHPELSGQEYQTAAYVAGVLSSCGLHVEEAIGKTGVVGQLSGKGDDPRLLAIRTDMDALPIEEMVSLPFASRHPGVMHACGHDIHTTLGLGTAMVLSQMGHRLPGDVRFLFQPAEEIAQGASWMIQDGAMKGVSHILGVHVFPSIPAQQVGIRYGALTAAADDLEIFIQGESGHGARPHEAIDAIWIAAQVITALQQAISRTQNPLRPMVLSLGQISGGRAPNVIADQVRMAGTVRSLHPETHAQLPQWIEGIVANVCQTYGAKYEVNYRRGVPSVQNDAQLNKLLENAVREAWGESALQIIPEPSLGAEDFALYLEHAPGAMFRLGTGFGDRQMNHPLHHPRFEADEAAILTGVVTLSYAAWQYWQNIAI.

This sequence belongs to the peptidase M20 family.

The polypeptide is Probable hydrolase sll0100 (Synechocystis sp. (strain ATCC 27184 / PCC 6803 / Kazusa)).